Here is a 669-residue protein sequence, read N- to C-terminus: 5-taurinomethyluridine-[tRNA] synthase subunit MTO1, mitochondrial (669 aa).

Residues 1 to 25 (MFLLRGRGHWAAASLGRRLPLRRLR) constitute a mitochondrion transit peptide. Residues 42-47 (GGGHAG), valine 154, serine 217, and glutamine 406 contribute to the FAD site. An N6-methyllysine modification is found at lysine 507.

The protein belongs to the MnmG family. As to quaternary structure, homodimer; forms a dimer in the presence of potassium. Interacts with GTPBP3; forms the GTPBP3-MTO1 complex composed of homodimers of GTPBP3 and MTO1. It depends on FAD as a cofactor. In terms of tissue distribution, ubiquitously expressed in various tissues, but with markedly elevated expression in tissues of high metabolic rates.

Its subcellular location is the mitochondrion. The catalysed reaction is 5,10-methylenetetrahydrofolate + uridine(34) in tRNA + taurine + GTP + A + H2O = 5-taurinomethyluridine(34) in tRNA + 7,8-dihydrofolate + GDP + AH2 + phosphate + H(+). Functionally, component of the GTPBP3-MTO1 complex that catalyzes the 5-taurinomethyluridine (taum(5)U) modification at the 34th wobble position (U34) of mitochondrial tRNAs (mt-tRNAs), which plays a role in mt-tRNA decoding and mitochondrial translation. Taum(5)U formation on mammalian mt-tRNA requires the presence of both GTPBP3-mediated GTPase activity and MTO1 catalytic activity. The polypeptide is 5-taurinomethyluridine-[tRNA] synthase subunit MTO1, mitochondrial (Mus musculus (Mouse)).